Consider the following 111-residue polypeptide: uncharacterized protein (111 aa).

This is an uncharacterized protein from Saccharolobus solfataricus (strain ATCC 35092 / DSM 1617 / JCM 11322 / P2) (Sulfolobus solfataricus).